The chain runs to 103 residues: Serine protease inhibitor 4 (103 aa).

Cysteines 56 and 73 form a disulfide.

This sequence belongs to the protease inhibitor I3 (leguminous Kunitz-type inhibitor) family.

It is found in the vacuole. Functionally, inhibitor of serine protease. May protect the plant by inhibiting proteases of invading organisms. The polypeptide is Serine protease inhibitor 4 (Solanum tuberosum (Potato)).